A 160-amino-acid polypeptide reads, in one-letter code: Thioredoxin-like protein 4A homolog (160 aa).

Positions 132-160 (KFLKKKKKKKNKKKQKKKIKKIKKKIKNN) are disordered. The span at 133–160 (FLKKKKKKKNKKKQKKKIKKIKKKIKNN) shows a compositional bias: basic residues.

Belongs to the DIM1 family. Component of the precatalytic spliceosome (spliceosome B complex). Component of the U5 snRNP complex. Component of the U4/U6-U5 tri-snRNP complex.

The protein localises to the nucleus. Its function is as follows. Plays a role in pre-mRNA splicing as component of the U5 snRNP and U4/U6-U5 tri-snRNP complexes that are involved in spliceosome assembly, and as component of the precatalytic spliceosome (spliceosome B complex). In Dictyostelium discoideum (Social amoeba), this protein is Thioredoxin-like protein 4A homolog (txnl4a).